The following is a 231-amino-acid chain: Ribosomal RNA small subunit methyltransferase G (231 aa).

S-adenosyl-L-methionine contacts are provided by residues Gly92, Leu97, Val143–Glu144, and Arg162.

Belongs to the methyltransferase superfamily. RNA methyltransferase RsmG family.

The protein localises to the cytoplasm. The enzyme catalyses guanosine(527) in 16S rRNA + S-adenosyl-L-methionine = N(7)-methylguanosine(527) in 16S rRNA + S-adenosyl-L-homocysteine. In terms of biological role, specifically methylates the N7 position of guanine in position 527 of 16S rRNA. This Burkholderia thailandensis (strain ATCC 700388 / DSM 13276 / CCUG 48851 / CIP 106301 / E264) protein is Ribosomal RNA small subunit methyltransferase G.